A 427-amino-acid polypeptide reads, in one-letter code: Endothelin-1 receptor (427 aa).

The signal sequence occupies residues 1–20; it reads METLCLRASFWLALVGCVIS. Over 21–80 the chain is Extracellular; the sequence is DNPERYSTNLSNHVDDFTTFRGTELSFLVTTHQPTNLVLPSNGSMHNYCPQQTKITSAFK. Residues asparagine 29 and asparagine 62 are each glycosylated (N-linked (GlcNAc...) asparagine). A helical transmembrane segment spans residues 81-102; that stretch reads YINTVISCTIFIVGMVGNATLL. At 103–112 the chain is on the cytoplasmic side; sequence RIIYQNKCMR. Residues 113–132 form a helical membrane-spanning segment; it reads NGPNALIASLALGDLIYVVI. Residues 133-159 lie on the Extracellular side of the membrane; that stretch reads DLPINVFKLLAGRWPFDHNDFGVFLCK. Cysteine 158 and cysteine 239 form a disulfide bridge. Residues 160 to 181 form a helical membrane-spanning segment; that stretch reads LFPFLQKSSVGITVLNLCALSV. The Cytoplasmic portion of the chain corresponds to 182-205; it reads DRYRAVASWSRVQGIGIPLVTAIE. The chain crosses the membrane as a helical span at residues 206–229; that stretch reads IVSIWILSFILAIPEAIGFVMVPF. Residues 230–256 are Extracellular-facing; sequence EYRGEQHKTCMLNATSKFMEFYQDVKD. A helical transmembrane segment spans residues 257–278; the sequence is WWLFGFYFCMPLVCTAIFYTLM. Residues 279-306 are Cytoplasmic-facing; it reads TCEMLNRRNGSLRIALSEHLKQRREVAK. Residues 307-328 form a helical membrane-spanning segment; the sequence is TVFCLVVIFALCWFPLHLSRIL. Over 329 to 347 the chain is Extracellular; sequence KKTVYNEMDKNRCELLSFL. The chain crosses the membrane as a helical span at residues 348–372; it reads LLMDYIGINLATMNSCINPIALYFV. Residues 373-427 lie on the Cytoplasmic side of the membrane; it reads SKKFKNCFQSCLCCCCYQSKSLMTSVPMNGTSIQWKNHDQNNHNTDRSSHKDSMN. Positions 406 to 427 are disordered; the sequence is QWKNHDQNNHNTDRSSHKDSMN. Basic and acidic residues predominate over residues 408-427; that stretch reads KNHDQNNHNTDRSSHKDSMN. Serine 425 is subject to Phosphoserine.

The protein belongs to the G-protein coupled receptor 1 family. Endothelin receptor subfamily. EDNRA sub-subfamily. As to quaternary structure, interacts with HDAC7 and KAT5. Isoform 1, isoform 3 and isoform 4 are expressed in a variety of tissues, with highest levels in the aorta and cerebellum, followed by lung, atrium and cerebral cortex, lower levels in the placenta, kidney, adrenal gland, duodenum, colon, ventricle and liver but no expression in umbilical vein endothelial cells. Within the placenta, isoform 1, isoform 2, isoform 3 and isoform 4 are expressed in the villi and stem villi vessels.

It is found in the cell membrane. Functionally, receptor for endothelin-1. Mediates its action by association with G proteins that activate a phosphatidylinositol-calcium second messenger system. The rank order of binding affinities for ET-A is: ET1 &gt; ET2 &gt;&gt; ET3. This Homo sapiens (Human) protein is Endothelin-1 receptor.